Here is a 636-residue protein sequence, read N- to C-terminus: NADP-dependent malic enzyme, chloroplastic (636 aa).

The disordered stretch occupies residues Met1 to Gly28. A chloroplast-targeting transit peptide spans Met1 to Ala62. A compositionally biased stretch (low complexity) spans Ala7–Pro18. The Proton donor role is filled by Tyr184. Arg237 is a binding site for NAD(+). Lys255 acts as the Proton acceptor in catalysis. Positions 327, 328, and 351 each coordinate a divalent metal cation. Residue Asp351 coordinates NAD(+). Leu380–Ala396 lines the NADP(+) pocket. Position 492 (Asn492) interacts with NAD(+).

It belongs to the malic enzymes family. As to quaternary structure, homotetramer. Requires Mg(2+) as cofactor. Mn(2+) serves as cofactor.

Its subcellular location is the plastid. It localises to the chloroplast. The enzyme catalyses (S)-malate + NADP(+) = pyruvate + CO2 + NADPH. It catalyses the reaction oxaloacetate + H(+) = pyruvate + CO2. It participates in photosynthesis; C4 acid pathway. The chloroplastic ME isoform decarboxylates malate shuttled from neighboring mesophyll cells. The CO(2) released is then refixed by ribulose-bisphosphate carboxylase. This pathway eliminates the photorespiratory loss of CO(2) that occurs in most plants. In Zea mays (Maize), this protein is NADP-dependent malic enzyme, chloroplastic (MOD1).